Here is a 163-residue protein sequence, read N- to C-terminus: Olfactory marker protein (163 aa).

Ala-2 carries the N-acetylalanine modification.

The protein belongs to the olfactory marker protein family. Interacts with BEX1 and BEX2. In terms of tissue distribution, uniquely associated with mature olfactory receptor neurons.

Its subcellular location is the cytoplasm. In terms of biological role, may act as a modulator of the olfactory signal-transduction cascade. The polypeptide is Olfactory marker protein (Omp) (Mus musculus (Mouse)).